The primary structure comprises 360 residues: Ferredoxin--NADP reductase, leaf isozyme 1, chloroplastic (360 aa).

A chloroplast-targeting transit peptide spans M1–Q49. The FAD-binding FR-type domain maps to K81–M203. Residues R139–S142, C160–K162, Y166, and V177–S179 each bind FAD. S142 and K162 together coordinate NADP(+). C178 and C183 are oxidised to a cystine. S179 is modified (phosphoserine). Phosphothreonine is present on T210. FAD is bound at residue T218. NADP(+) contacts are provided by residues T218, V250–P251, S280–R281, K290, G319–L320, and E358.

Belongs to the ferredoxin--NADP reductase type 1 family. Heterodimer with LFNR2. Interacts with PGRL1A and PGRL1B. Interacts with TIC62. Component of high molecular weight thylakoid LFNRs-containing protein complexes containing LIR1, LFNR1, LFNR2, TIC62 and TROL proteins. Interacts directly with LIR1 and TIC62; LIR1 increases the affinity of LFNR1 and LFNR2 for TIC62. Binds to YCF54 in chloroplasts. FAD serves as cofactor. In terms of processing, may form interchain disulfide bonds with LIR1. Expressed in shoots. Restricted to green tissues, being more abundant in siliques.

It is found in the plastid. Its subcellular location is the chloroplast stroma. It localises to the chloroplast thylakoid membrane. It carries out the reaction 2 reduced [2Fe-2S]-[ferredoxin] + NADP(+) + H(+) = 2 oxidized [2Fe-2S]-[ferredoxin] + NADPH. Its pathway is energy metabolism; photosynthesis. In terms of biological role, plays a key role in regulating the relative amounts of cyclic and non-cyclic electron flow to meet the demands of the plant for ATP and reducing power. Probable electron donor required for the MgProto monomethylester (MgProtoME) cyclase complex reaction to form protochlorophyllide, thus connecting chlorophyll synthesis with photosynthetic activity. This is Ferredoxin--NADP reductase, leaf isozyme 1, chloroplastic from Arabidopsis thaliana (Mouse-ear cress).